The following is a 325-amino-acid chain: NADH-quinone oxidoreductase subunit H (325 aa).

8 helical membrane-spanning segments follow: residues 8-28, 81-101, 114-134, 159-179, 186-206, 237-257, 265-285, and 304-324; these read VIDI…VVTC, GIFT…FAIV, IGVL…LFAG, FLGL…LGAI, LWNV…GVAV, FFVG…TLFF, LPPF…FILI, and ICLP…LYNA.

The protein belongs to the complex I subunit 1 family. NDH-1 is composed of 13 different subunits. Subunits NuoA, H, J, K, L, M, N constitute the membrane sector of the complex.

It localises to the cell inner membrane. It catalyses the reaction a quinone + NADH + 5 H(+)(in) = a quinol + NAD(+) + 4 H(+)(out). Its function is as follows. NDH-1 shuttles electrons from NADH, via FMN and iron-sulfur (Fe-S) centers, to quinones in the respiratory chain. The immediate electron acceptor for the enzyme in this species is believed to be ubiquinone. Couples the redox reaction to proton translocation (for every two electrons transferred, four hydrogen ions are translocated across the cytoplasmic membrane), and thus conserves the redox energy in a proton gradient. This subunit may bind ubiquinone. The sequence is that of NADH-quinone oxidoreductase subunit H from Sodalis glossinidius (strain morsitans).